A 498-amino-acid polypeptide reads, in one-letter code: Angiopoietin-4 (498 aa).

Positions 1 to 22 (MPSPPAMLLGGLLLIVASTTVA) are cleaved as a signal peptide. The disordered stretch occupies residues 51 to 80 (EPEPCPPEPEAFGGSNSLQRDSPAATLNLG). The stretch at 85–109 (QRMRQLEKMLENNTQWLQKLERYIQ) forms a coiled coil. Asn96, Asn126, Asn158, Asn247, Asn295, Asn306, Asn332, and Asn424 each carry an N-linked (GlcNAc...) asparagine glycan. A coiled-coil region spans residues 186-254 (HELHRLQGHN…SSNSSLLQRQ (69 aa)). The Fibrinogen C-terminal domain occupies 277 to 497 (RAADQLFQDC…TTRMMVRPSG (221 aa)). A disulfide bridge links Cys286 with Cys315. An intrachain disulfide couples Cys439 to Cys452.

Homodimer; disulfide-linked. Interacts with TEK/TIE2.

The protein localises to the secreted. Binds to TEK/TIE2, modulating ANGPT1 signaling. Can induce tyrosine phosphorylation of TEK/TIE2. Promotes endothelial cell survival, migration and angiogenesis. In Bos taurus (Bovine), this protein is Angiopoietin-4 (ANGPT4).